The primary structure comprises 380 residues: MSDSSAPDLPSKPSSLNAGQSSSLQTTNTGIGMGSGMGSGMGMGTYGNSYGSSYGGGYGSSMYGSGGYGMGGYGSSMYGGSRYGMGSYGMGGYGMGGYGMGMNTGMNGMGMAGSLAQGSEATFQLIESIIGAVGGFAQVLEATYMATHSSFFTMISMADQLSHLKTALGSMLGIYTVINWLKRIMGKLMGVKNKLTPDEFRKFQEKQMKKLSNSNNTGGPNKNTNKLSLKPLLLFLAAVVGFPYLLKKLIAHLAETSQMNGNFITSGGSLQGNLDPTKLEFARALYDFNPENEEMELKLARGELMAILSKTEPNSNQESTWWKCRSRDGKVGFVPYNYVEIIERHQRPVPEAQEEPAAAVLAERQQQPIIDSTEFQKMKT.

Residues 1-30 (MSDSSAPDLPSKPSSLNAGQSSSLQTTNTG) form a disordered region. Residues 1 to 230 (MSDSSAPDLP…NKNTNKLSLK (230 aa)) lie on the Lumenal side of the membrane. A compositionally biased stretch (polar residues) spans 12–30 (KPSSLNAGQSSSLQTTNTG). The chain crosses the membrane as a helical span at residues 231–251 (PLLLFLAAVVGFPYLLKKLIA). Residues 252 to 380 (HLAETSQMNG…DSTEFQKMKT (129 aa)) lie on the Cytoplasmic side of the membrane. In terms of domain architecture, SH3 spans 277–344 (TKLEFARALY…PYNYVEIIER (68 aa)).

Belongs to the peroxin-13 family. As to quaternary structure, interacts (via SH3 domain) with PEX14 (via SH3-binding motif); forming the PEX13-PEX14 docking complex.

The protein localises to the peroxisome membrane. Functionally, component of the PEX13-PEX14 docking complex, a translocon channel that specifically mediates the import of peroxisomal cargo proteins bound to PEX5 receptor. The PEX13-PEX14 docking complex forms a large import pore which can be opened to a diameter of about 9 nm. Mechanistically, PEX5 receptor along with cargo proteins associates with the PEX14 subunit of the PEX13-PEX14 docking complex in the cytosol, leading to the insertion of the receptor into the organelle membrane with the concomitant translocation of the cargo into the peroxisome matrix. The chain is Peroxisomal membrane protein PEX13 (PEX13) from Komagataella pastoris (Yeast).